The primary structure comprises 599 residues: DNA primase (599 aa).

The segment at 38–62 (CPFHQEKTPSFTVSDSKRFFYCFGC) adopts a CHC2-type zinc-finger fold. Residues 250–332 (NYSILVEGYF…EKKISFIRLP (83 aa)) enclose the Toprim domain. Mg(2+)-binding residues include E256, D300, and D302.

Belongs to the DnaG primase family. In terms of assembly, monomer. Interacts with DnaB. Zn(2+) is required as a cofactor. The cofactor is Mg(2+).

It catalyses the reaction ssDNA + n NTP = ssDNA/pppN(pN)n-1 hybrid + (n-1) diphosphate.. In terms of biological role, RNA polymerase that catalyzes the synthesis of short RNA molecules used as primers for DNA polymerase during DNA replication. This chain is DNA primase, found in Rickettsia bellii (strain RML369-C).